We begin with the raw amino-acid sequence, 212 residues long: 2',3'-cyclic-nucleotide 3'-phosphodiesterase (212 aa).

Catalysis depends on H51, which acts as the Proton donor/acceptor. T53 is a substrate binding site. H146 functions as the Proton donor/acceptor in the catalytic mechanism. Residues S148 and Y151 each coordinate substrate.

This sequence belongs to the 2H phosphoesterase superfamily. CPD1 family.

The protein localises to the golgi apparatus. The enzyme catalyses a nucleoside 2',3'-cyclic phosphate + H2O = a nucleoside 2'-phosphate + H(+). Involved in the metabolism of ADP-ribose 1',2'-cyclic phosphate which is produced as a consequence of tRNA splicing. This is 2',3'-cyclic-nucleotide 3'-phosphodiesterase (cpd-7) from Neurospora crassa (strain ATCC 24698 / 74-OR23-1A / CBS 708.71 / DSM 1257 / FGSC 987).